We begin with the raw amino-acid sequence, 106 residues long: Protein RnfH (106 aa).

Belongs to the UPF0125 (RnfH) family.

This Ectopseudomonas mendocina (strain ymp) (Pseudomonas mendocina) protein is Protein RnfH.